The following is a 428-amino-acid chain: Glutamate-1-semialdehyde 2,1-aminomutase (428 aa).

N6-(pyridoxal phosphate)lysine is present on Lys265.

The protein belongs to the class-III pyridoxal-phosphate-dependent aminotransferase family. HemL subfamily. As to quaternary structure, homodimer. Requires pyridoxal 5'-phosphate as cofactor.

It localises to the cytoplasm. The enzyme catalyses (S)-4-amino-5-oxopentanoate = 5-aminolevulinate. It participates in porphyrin-containing compound metabolism; protoporphyrin-IX biosynthesis; 5-aminolevulinate from L-glutamyl-tRNA(Glu): step 2/2. In Proteus mirabilis (strain HI4320), this protein is Glutamate-1-semialdehyde 2,1-aminomutase.